A 141-amino-acid polypeptide reads, in one-letter code: Large ribosomal subunit protein uL11B/uL11C (141 aa).

This sequence belongs to the universal ribosomal protein uL11 family. As to quaternary structure, part of the ribosomal stalk of the 50S ribosomal subunit. Interacts with L10 and the large rRNA to form the base of the stalk. L10 forms an elongated spine to which L12 dimers bind in a sequential fashion forming a multimeric L10(L12)X complex. One or more lysine residues are methylated.

Functionally, forms part of the ribosomal stalk which helps the ribosome interact with GTP-bound translation factors. The polypeptide is Large ribosomal subunit protein uL11B/uL11C (Bacillus cereus (strain ATCC 14579 / DSM 31 / CCUG 7414 / JCM 2152 / NBRC 15305 / NCIMB 9373 / NCTC 2599 / NRRL B-3711)).